Reading from the N-terminus, the 287-residue chain is MTILVLGGRGKTASRLAALLDQAKTPFLVGSSSASPSDPYKSSQFNWLKRDTWERPFEQAGKHGLGTISSIYLVGPPVMDIAPPMIEFVDLARAKGVQRFVLLSASTVEKGGHSMGQVHAYLDSLAEVEYVALRPTWFMENLLEDPSREWIKNENQIITATGDGKIPFVSADDIASVAFHCLTEWGSHKTEYVILGPELLSYGQVAEILTTILGKKIIHRSLTETGLAELLVKKAGIPADFAAMLSAMEVDVKNGPQEVLNNSVVEVTGNPPRYFKDVAEHEKHVWA.

It belongs to the fgaFS/easG family.

It catalyses the reaction festuclavine + NAD(+) = 6,8-dimethyl-6,7-didehydroergoline + NADH + H(+). Its pathway is alkaloid biosynthesis; ergot alkaloid biosynthesis. Functionally, festuclavine synthase; part of the gene cluster that mediates the biosynthesis of isofumigaclavines, fungal ergot alkaloids. The tryptophan dimethylallyltransferase ifgA catalyzes the first step of ergot alkaloid biosynthesis by condensing dimethylallyl diphosphate (DMAP) and tryptophan to form 4-dimethylallyl-L-tryptophan. The second step is catalyzed by the methyltransferase ifgB that methylates 4-dimethylallyl-L-tryptophan in the presence of S-adenosyl-L-methionine, resulting in the formation of N-methyl-dimethylallyl-L-tryptophan. The catalase ifgD and the FAD-dependent oxidoreductase ifgC then transform N-methyl-dimethylallyl-L-tryptophan to chanoclavine-I which is further oxidized by ifgE in the presence of NAD(+), resulting in the formation of chanoclavine-I aldehyde. The chanoclavine-I aldehyde reductases ifgG and/or fgaOx3 reduce chanoclavine-I aldehyde to dihydrochanoclavine-I aldehyde that spontaneously dehydrates to form 6,8-dimethyl-6,7-didehydroergoline. The festuclavine dehydrogenases ifgF1 and/or ifgF2 then catalyze the reduction of 6,8-dimethyl-6,7-didehydroergoline to form festuclavine. Hydrolysis of festuclavine by a yet undetermined cytochrome P450 monooxygenase (called ifgH) then leads to the formation of isofumigaclavine B which is in turn acetylated by ifgI to isofumigaclavine A. Penicillium roqueforti has interestingly at least two sets of genes for the consumption of chanoclavine-I aldehyde on three different loci, the OYEs ifgG/fgaOx3 and the festuclavine synthase homologs ifgF1/ifgF2. The reason for the duplication of these genes is unclear, probably to ensure the conversion of chanoclavine-I aldehyde by differential gene expression under various environmental conditions. The polypeptide is Festuclavine synthase II (Penicillium roqueforti (strain FM164)).